The chain runs to 648 residues: PAN2-PAN3 deadenylation complex subunit PAN3 (648 aa).

The disordered stretch occupies residues 1-24; that stretch reads MAATRYPPNDLRRQVGSPRSKGRE. The C3H1-type zinc-finger motif lies at 24–53; it reads ENKDTLCRNILIYGNCRYEDQGCTFNHDQN. The tract at residues 244–506 is pseudokinase domain; it reads QVMPNSGLPQ…SIENFISGIA (263 aa). Residues Arg-295, 345 to 352, and 404 to 405 each bind ATP; these read DYHPLSKT and SK. Residues 507-545 are a coiled coil; it reads THMTAFFDLALQDGDEKQFHLARELENGRIARSMMKLMT. Positions 546 to 648 are knob domain; that stretch reads IIERAEPGGA…SKTGAPGANN (103 aa).

The protein belongs to the protein kinase superfamily. PAN3 family. In terms of assembly, homodimer. Forms a heterotrimer with a catalytic subunit PAN2 to form the poly(A)-nuclease (PAN) deadenylation complex. Interacts (via PAM-2 motif) with poly(A)-binding protein PAB1 (via PABC domain), conferring substrate specificity of the enzyme complex.

Its subcellular location is the cytoplasm. Functionally, regulatory subunit of the poly(A)-nuclease (PAN) deadenylation complex, one of two cytoplasmic mRNA deadenylases involved in mRNA turnover. PAN specifically shortens poly(A) tails of RNA and the activity is stimulated by poly(A)-binding protein PAB1. PAN deadenylation is followed by rapid degradation of the shortened mRNA tails by the CCR4-NOT complex. Deadenylated mRNAs are then degraded by two alternative mechanisms, namely exosome-mediated 3'-5' exonucleolytic degradation, or deadenylation-dependent mRNA decaping and subsequent 5'-3' exonucleolytic degradation by XRN1. May also be involved in post-transcriptional maturation of mRNA poly(A) tails. PAN3 acts as a positive regulator for PAN activity, recruiting the catalytic subunit PAN2 to mRNA via its interaction with RNA and with PAB1. This chain is PAN2-PAN3 deadenylation complex subunit PAN3, found in Chaetomium globosum (strain ATCC 6205 / CBS 148.51 / DSM 1962 / NBRC 6347 / NRRL 1970) (Soil fungus).